The primary structure comprises 959 residues: Protein moonraker (959 aa).

The tract at residues 124–156 (LPHSSHKGMHTKVERKDSKSQDVCHCSHQPSRV) is disordered. Over residues 134–145 (TKVERKDSKSQD) the composition is skewed to basic and acidic residues. Ser279 is subject to Phosphoserine. The segment covering 456–470 (EEAPRIEDNGTDFKD) has biased composition (basic and acidic residues). Disordered stretches follow at residues 456 to 560 (EEAP…ASPK) and 572 to 610 (RDAA…AESS). The span at 515 to 533 (PNQPYSKSRLQQTTVSSRL) shows a compositional bias: polar residues. Pro residues predominate over residues 547–558 (WIPPNPTSPPAS). Positions 582–674 (QEDIHKESQL…TQLADKVEEA (93 aa)) form a coiled coil. Over residues 583-599 (EDIHKESQLRGDAEQEA) the composition is skewed to basic and acidic residues. A Phosphoserine modification is found at Ser691. Disordered stretches follow at residues 692–721 (SVEA…SDVP) and 848–883 (LDES…PLSV). Over residues 707–717 (AAAAAQPAEQA) the composition is skewed to low complexity. The segment covering 857–874 (GSEKREAPLPLSREDLHQ) has biased composition (basic and acidic residues). Residues 877–959 (GQTPLSVPPR…FTSEFLEAAA (83 aa)) are necessary and sufficient for CEP20-binding.

As to quaternary structure, interacts with CEP63 and WDR62. Forms a complex with OFD1 and CEP20/FOR20. Interacts with PCM1.

It localises to the cytoplasm. The protein resides in the cytoskeleton. It is found in the microtubule organizing center. Its subcellular location is the centrosome. The protein localises to the centriolar satellite. Functionally, involved in centriole duplication. Positively regulates CEP63 centrosomal localization. Required for WDR62 centrosomal localization and promotes the centrosomal localization of CDK2. May play a role in cilium assembly. The polypeptide is Protein moonraker (Kiaa0753) (Mus musculus (Mouse)).